The following is a 373-amino-acid chain: Chaperone protein DnaJ (373 aa).

A J domain is found at 4–68 (NYYQILGVSK…QKRAAYDRLG (65 aa)). Residues 136–214 (GIEKNINFSS…CHGMGRYHKQ (79 aa)) form a CR-type zinc finger. Zn(2+)-binding residues include Cys-149, Cys-152, Cys-166, Cys-169, Cys-188, Cys-191, Cys-202, and Cys-205. CXXCXGXG motif repeat units lie at residues 149–156 (CNTCHGSG), 166–173 (CDACSGVG), 188–195 (CHKCQGNG), and 202–209 (CKKCHGMG).

This sequence belongs to the DnaJ family. In terms of assembly, homodimer. Zn(2+) serves as cofactor.

The protein resides in the cytoplasm. Its function is as follows. Participates actively in the response to hyperosmotic and heat shock by preventing the aggregation of stress-denatured proteins and by disaggregating proteins, also in an autonomous, DnaK-independent fashion. Unfolded proteins bind initially to DnaJ; upon interaction with the DnaJ-bound protein, DnaK hydrolyzes its bound ATP, resulting in the formation of a stable complex. GrpE releases ADP from DnaK; ATP binding to DnaK triggers the release of the substrate protein, thus completing the reaction cycle. Several rounds of ATP-dependent interactions between DnaJ, DnaK and GrpE are required for fully efficient folding. Also involved, together with DnaK and GrpE, in the DNA replication of plasmids through activation of initiation proteins. This Rickettsia rickettsii (strain Sheila Smith) protein is Chaperone protein DnaJ.